The following is a 456-amino-acid chain: Adenylosuccinate synthetase (456 aa).

Residues 11 to 17 and 39 to 41 contribute to the GTP site; these read GDEGKGG and GHT. The Proton acceptor role is filled by D12. Mg(2+) is bound by residues D12 and G39. IMP is bound by residues 12-15, 37-40, T127, R141, Q232, T247, and R328; these read DEGK and NAGH. The active-site Proton donor is the H40. Residue 324–330 participates in substrate binding; that stretch reads TVTGRPR. GTP contacts are provided by residues R330, 356-358, and 441-443; these read HLD and GVG.

This sequence belongs to the adenylosuccinate synthetase family. As to quaternary structure, homodimer. The cofactor is Mg(2+).

The protein resides in the cytoplasm. It catalyses the reaction IMP + L-aspartate + GTP = N(6)-(1,2-dicarboxyethyl)-AMP + GDP + phosphate + 2 H(+). The protein operates within purine metabolism; AMP biosynthesis via de novo pathway; AMP from IMP: step 1/2. In terms of biological role, plays an important role in the de novo pathway of purine nucleotide biosynthesis. Catalyzes the first committed step in the biosynthesis of AMP from IMP. The chain is Adenylosuccinate synthetase from Natronomonas pharaonis (strain ATCC 35678 / DSM 2160 / CIP 103997 / JCM 8858 / NBRC 14720 / NCIMB 2260 / Gabara) (Halobacterium pharaonis).